The following is a 600-amino-acid chain: Gamma-terpinene synthase, chloroplastic (600 aa).

Residues 1-40 constitute a chloroplast transit peptide; that stretch reads MALNLLSSLPAACNFTRLSLPLSSKVNGFVPPITQVQYPM. Mg(2+) contacts are provided by Asp353, Asp357, Asp498, and Glu506. A DDXXD motif motif is present at residues 353 to 357; that stretch reads DDVYD.

This sequence belongs to the terpene synthase family. Mn(2+) serves as cofactor. Requires Mg(2+) as cofactor.

Its subcellular location is the plastid. It localises to the chloroplast. It carries out the reaction (2E)-geranyl diphosphate = gamma-terpinene + diphosphate. It participates in secondary metabolite biosynthesis; terpenoid biosynthesis. With respect to regulation, inhibited by 100 mM KCl. Monoterpene synthase which catalyzes the conversion of geranyl diphosphate to gamma-terpinene and the minor products limonene, alpha-pinene, beta-pinene, alpha-terpinolene, alpha-thujene, alpha-terpinene, myrcene and sabinene. This is Gamma-terpinene synthase, chloroplastic from Citrus limon (Lemon).